The sequence spans 895 residues: Alanine--tRNA ligase (895 aa).

Positions 586, 590, 690, and 694 each coordinate Zn(2+).

The protein belongs to the class-II aminoacyl-tRNA synthetase family. Requires Zn(2+) as cofactor.

The protein resides in the cytoplasm. It catalyses the reaction tRNA(Ala) + L-alanine + ATP = L-alanyl-tRNA(Ala) + AMP + diphosphate. In terms of biological role, catalyzes the attachment of alanine to tRNA(Ala) in a two-step reaction: alanine is first activated by ATP to form Ala-AMP and then transferred to the acceptor end of tRNA(Ala). Also edits incorrectly charged Ser-tRNA(Ala) and Gly-tRNA(Ala) via its editing domain. In Korarchaeum cryptofilum (strain OPF8), this protein is Alanine--tRNA ligase.